The chain runs to 313 residues: Protein PHOSPHATE-INDUCED 1 (313 aa).

The N-terminal stretch at 1 to 22 (MATSHFILKLFLVISFCNVCFA) is a signal peptide. An N-linked (GlcNAc...) asparagine glycan is attached at Asn-119.

This sequence belongs to the EXORDIUM family.

The protein resides in the secreted. The protein localises to the extracellular space. Its subcellular location is the apoplast. Its function is as follows. May be involved in the regulation of cell division. The polypeptide is Protein PHOSPHATE-INDUCED 1 (Nicotiana tabacum (Common tobacco)).